The primary structure comprises 259 residues: Imidazole glycerol phosphate synthase subunit HisF (259 aa).

Residues Asp11 and Asp130 contribute to the active site.

This sequence belongs to the HisA/HisF family. Heterodimer of HisH and HisF.

It localises to the cytoplasm. The enzyme catalyses 5-[(5-phospho-1-deoxy-D-ribulos-1-ylimino)methylamino]-1-(5-phospho-beta-D-ribosyl)imidazole-4-carboxamide + L-glutamine = D-erythro-1-(imidazol-4-yl)glycerol 3-phosphate + 5-amino-1-(5-phospho-beta-D-ribosyl)imidazole-4-carboxamide + L-glutamate + H(+). It participates in amino-acid biosynthesis; L-histidine biosynthesis; L-histidine from 5-phospho-alpha-D-ribose 1-diphosphate: step 5/9. Its function is as follows. IGPS catalyzes the conversion of PRFAR and glutamine to IGP, AICAR and glutamate. The HisF subunit catalyzes the cyclization activity that produces IGP and AICAR from PRFAR using the ammonia provided by the HisH subunit. This chain is Imidazole glycerol phosphate synthase subunit HisF, found in Chloroflexus aurantiacus (strain ATCC 29366 / DSM 635 / J-10-fl).